The following is a 120-amino-acid chain: Flagellar protein FliT (120 aa).

Positions 1-50 (MERHQHLLSEYQQILTLSEQMLMLATVENWNALVDLEMTYLKAVENTANI) are required for homodimerization. Positions 60–98 (LQELLRQKLRSILENEIEIKRLLQRRLDKLSELVGQSTR) are fliD binding.

The protein belongs to the FliT family. As to quaternary structure, homodimer. Interacts with FliD and FlhC.

Its subcellular location is the cytoplasm. The protein localises to the cytosol. Dual-function protein that regulates the transcription of class 2 flagellar operons and that also acts as an export chaperone for the filament-capping protein FliD. As a transcriptional regulator, acts as an anti-FlhDC factor; it directly binds FlhC, thus inhibiting the binding of the FlhC/FlhD complex to class 2 promoters, resulting in decreased expression of class 2 flagellar operons. As a chaperone, effects FliD transition to the membrane by preventing its premature polymerization, and by directing it to the export apparatus. The polypeptide is Flagellar protein FliT (Yersinia pestis bv. Antiqua (strain Antiqua)).